A 250-amino-acid polypeptide reads, in one-letter code: 2,3-bisphosphoglycerate-dependent phosphoglycerate mutase (250 aa).

Substrate-binding positions include 10-17 (RHGESQWN), 23-24 (TG), Arg-62, 89-92 (ERHY), Lys-100, 116-117 (RR), and 185-186 (GN). Catalysis depends on His-11, which acts as the Tele-phosphohistidine intermediate. Glu-89 (proton donor/acceptor) is an active-site residue.

The protein belongs to the phosphoglycerate mutase family. BPG-dependent PGAM subfamily. Homodimer.

It catalyses the reaction (2R)-2-phosphoglycerate = (2R)-3-phosphoglycerate. It functions in the pathway carbohydrate degradation; glycolysis; pyruvate from D-glyceraldehyde 3-phosphate: step 3/5. In terms of biological role, catalyzes the interconversion of 2-phosphoglycerate and 3-phosphoglycerate. This Salmonella paratyphi A (strain ATCC 9150 / SARB42) protein is 2,3-bisphosphoglycerate-dependent phosphoglycerate mutase.